The sequence spans 140 residues: ATP synthase epsilon chain (140 aa).

It belongs to the ATPase epsilon chain family. F-type ATPases have 2 components, CF(1) - the catalytic core - and CF(0) - the membrane proton channel. CF(1) has five subunits: alpha(3), beta(3), gamma(1), delta(1), epsilon(1). CF(0) has three main subunits: a, b and c.

The protein resides in the cell inner membrane. In terms of biological role, produces ATP from ADP in the presence of a proton gradient across the membrane. This is ATP synthase epsilon chain from Xanthomonas oryzae pv. oryzae (strain MAFF 311018).